A 465-amino-acid chain; its full sequence is Chromosomal replication initiator protein DnaA (465 aa).

The segment at 1-87 is domain I, interacts with DnaA modulators; it reads MLWTDCLTRL…RPGSILSSSE (87 aa). The disordered stretch occupies residues 81–123; sequence SILSSSEQPATTTAALQTAPIPQPAKGKREPEPVANTAVSSKS. The segment covering 88 to 100 has biased composition (low complexity); it reads QPATTTAALQTAP. Residues 88 to 127 are domain II; sequence QPATTTAALQTAPIPQPAKGKREPEPVANTAVSSKSSKKK. Positions 128–345 are domain III, AAA+ region; sequence LLNPQFTFSL…GALNKVVAIS (218 aa). Positions 173, 175, 176, and 177 each coordinate ATP. Residues 346–465 form a domain IV, binds dsDNA region; it reads RFKGAPIDLD…YKNLLRLLQS (120 aa).

The protein belongs to the DnaA family. In terms of assembly, oligomerizes as a right-handed, spiral filament on DNA at oriC.

Its subcellular location is the cytoplasm. Functionally, plays an essential role in the initiation and regulation of chromosomal replication. ATP-DnaA binds to the origin of replication (oriC) to initiate formation of the DNA replication initiation complex once per cell cycle. Binds the DnaA box (a 9 base pair repeat at the origin) and separates the double-stranded (ds)DNA. Forms a right-handed helical filament on oriC DNA; dsDNA binds to the exterior of the filament while single-stranded (ss)DNA is stabiized in the filament's interior. The ATP-DnaA-oriC complex binds and stabilizes one strand of the AT-rich DNA unwinding element (DUE), permitting loading of DNA polymerase. After initiation quickly degrades to an ADP-DnaA complex that is not apt for DNA replication. Binds acidic phospholipids. This is Chromosomal replication initiator protein DnaA from Acinetobacter baumannii (strain SDF).